The primary structure comprises 104 residues: NADH-quinone oxidoreductase subunit K (104 aa).

The next 3 helical transmembrane spans lie at 4 to 24 (VPAS…LFGA), 31 to 51 (VIVL…LVAF), and 67 to 87 (LFTM…LIAL).

Belongs to the complex I subunit 4L family. As to quaternary structure, NDH-1 is composed of 14 different subunits. Subunits NuoA, H, J, K, L, M, N constitute the membrane sector of the complex.

It is found in the cell membrane. It carries out the reaction a quinone + NADH + 5 H(+)(in) = a quinol + NAD(+) + 4 H(+)(out). Its function is as follows. NDH-1 shuttles electrons from NADH, via FMN and iron-sulfur (Fe-S) centers, to quinones in the respiratory chain. The immediate electron acceptor for the enzyme in this species is believed to be a menaquinone. Couples the redox reaction to proton translocation (for every two electrons transferred, four hydrogen ions are translocated across the cytoplasmic membrane), and thus conserves the redox energy in a proton gradient. This Bacillus cereus (strain Q1) protein is NADH-quinone oxidoreductase subunit K.